We begin with the raw amino-acid sequence, 612 residues long: Protein NorD (612 aa).

The disordered stretch occupies residues 220-246 (EGEGDLETPPSGQSRQRNGARRVDDSS). In terms of domain architecture, VWFA spans 420-609 (DLACLLLADL…FPPAAAVQAT (190 aa)).

In terms of biological role, component of the anaerobic respiratory chain that transforms nitrate to dinitrogen (denitrification). The polypeptide is Protein NorD (norD) (Stutzerimonas stutzeri (Pseudomonas stutzeri)).